The chain runs to 334 residues: D-fructose 1,6-bisphosphatase class 2/sedoheptulose 1,7-bisphosphatase (334 aa).

Mn(2+) is bound by residues aspartate 33, glutamate 57, aspartate 85, and glutamate 88. Residues 88–90 (EGT), tyrosine 119, 164–166 (RAR), and 186–188 (DGD) each bind substrate. Glutamate 213 lines the Mn(2+) pocket.

The protein belongs to the FBPase class 2 family. In terms of assembly, homotetramer. The cofactor is Mn(2+).

The catalysed reaction is beta-D-fructose 1,6-bisphosphate + H2O = beta-D-fructose 6-phosphate + phosphate. It catalyses the reaction D-sedoheptulose 1,7-bisphosphate + H2O = D-sedoheptulose 7-phosphate + phosphate. It participates in carbohydrate biosynthesis; Calvin cycle. In terms of biological role, catalyzes the hydrolysis of fructose 1,6-bisphosphate (Fru 1,6-P2) and sedoheptulose 1,7-bisphosphate (Sed 1,7-P2) to fructose 6-phosphate and sedoheptulose 7-phosphate, respectively. In Prochlorococcus marinus (strain NATL1A), this protein is D-fructose 1,6-bisphosphatase class 2/sedoheptulose 1,7-bisphosphatase.